We begin with the raw amino-acid sequence, 339 residues long: MLHSIALRFEDDVTYFITSSEHETVADAAYQHGIRIPLDCRNGVCGTCKGFCEHGEYDGGDYIEDALSADEAREGFVLPCQMQARTDCVVRILASSSACQVKKSTMTGQMTEIDRGSSSTLQFTLAIDPSSKVDFLPGQYAQLRIPGTTESRAYSYSSMPGSSHVTFLVRDVPNGKMSGYLRNQATITETFTFDGPYGAFYLREPVRPILMLAGGTGLAPFLSMLQYMAGLQRNDLPSVRLVYGVNRDDDLVGLDKLDELATQLSGFSYITTVVDKDSAQLRRGYVTQQITNDDMNGGDVDIYVCGPPPMVEAVRSWLAAEKLNPVNFYFEKFAPTVGN.

In terms of domain architecture, 2Fe-2S ferredoxin-type spans 3 to 96; it reads HSIALRFEDD…DCVVRILASS (94 aa). C40, C45, C48, and C80 together coordinate [2Fe-2S] cluster. Residues 98–336 form a ferredoxin-reductase region; it reads ACQVKKSTMT…NFYFEKFAPT (239 aa). The FAD-binding FR-type domain occupies 103-203; it reads KSTMTGQMTE…DGPYGAFYLR (101 aa).

This sequence belongs to the bacterial ring-hydroxylating dioxygenase ferredoxin reductase family. Monomer. It is part of 2-halobenzoate dioxygenase two component enzyme system. The other component is a dioxygenase component consisting of 3 large (CbdA) subunits and 3 small (CbdB) subunits. The cofactor is FAD. [2Fe-2S] cluster serves as cofactor.

The catalysed reaction is 2 reduced [2Fe-2S]-[ferredoxin] + NAD(+) + H(+) = 2 oxidized [2Fe-2S]-[ferredoxin] + NADH. It participates in xenobiotic degradation; benzoate degradation via CoA ligation. In terms of biological role, electron transfer component of 2-halobenzoate 1,2-dioxygenase system. This Burkholderia cepacia (Pseudomonas cepacia) protein is 2-halobenzoate 1,2-dioxygenase electron transfer component (cbdC).